The following is a 691-amino-acid chain: DNA ligase (691 aa).

Residues 41-45 (DAEFD), 91-92 (SL), and Glu121 contribute to the NAD(+) site. Lys123 acts as the N6-AMP-lysine intermediate in catalysis. NAD(+)-binding residues include Arg144, Glu184, Lys300, and Lys324. Zn(2+) contacts are provided by Cys418, Cys421, Cys437, and Cys443. Residues 607 to 691 (SVPRTLAGLT…LLADGPASRT (85 aa)) enclose the BRCT domain.

This sequence belongs to the NAD-dependent DNA ligase family. LigA subfamily. Requires Mg(2+) as cofactor. It depends on Mn(2+) as a cofactor.

The enzyme catalyses NAD(+) + (deoxyribonucleotide)n-3'-hydroxyl + 5'-phospho-(deoxyribonucleotide)m = (deoxyribonucleotide)n+m + AMP + beta-nicotinamide D-nucleotide.. Functionally, DNA ligase that catalyzes the formation of phosphodiester linkages between 5'-phosphoryl and 3'-hydroxyl groups in double-stranded DNA using NAD as a coenzyme and as the energy source for the reaction. It is essential for DNA replication and repair of damaged DNA. This chain is DNA ligase, found in Mycobacterium tuberculosis (strain ATCC 25177 / H37Ra).